Here is a 406-residue protein sequence, read N- to C-terminus: MMQNIKDEAYKTYQNVKDEISSHLPQSAPEPTGPPFKCAIFGCGGINFGTAEGPWNNSQKLELVLGHRLQVVALLSPHKSSHERVLKQKAETEYASSYANTREFYSADEYLEYLDSHPEEKPDAYIIGIPPETHGSTQKGADLELAILKRFPDASLFIEKPISAAPVEDAFAVARRLPSESVISVGYMLRYLKTVQKAKEIIKEKNLKVVSTVAKYNSAYIHNSKKFWWIMSESGGPVVEQGTHFCDLSRYFGGDVEIDSIKVNRVEWDDPSGKLNAMPVDEKTIPPEERIPRFTAASWKYKDGGVGAFTHNITLQGAKYDTCIEVQADGYYLRIVDLYEEPVLYVRSPDSDEEKVYKYPNDDPYYSEFKIFLDAAEGKGDKNLIHSDFLDAVKTYELTKAITEAK.

It to S.pombe SpAC12C2.04.

It localises to the cytoplasm. Its subcellular location is the nucleus. This is an uncharacterized protein from Schizosaccharomyces pombe (strain 972 / ATCC 24843) (Fission yeast).